Reading from the N-terminus, the 165-residue chain is uncharacterized protein (165 aa).

A helical transmembrane segment spans residues 16–36 (ASISSILNFFFFYIMEYFVAV).

It belongs to the asfivirus F165R family.

The protein localises to the host membrane. This is an uncharacterized protein from African swine fever virus (strain Badajoz 1971 Vero-adapted) (Ba71V).